The chain runs to 475 residues: Kynureninase (475 aa).

Pyridoxal 5'-phosphate contacts are provided by residues leucine 142, threonine 143, 170–173 (FPSD), aspartate 255, histidine 258, and tyrosine 280. Lysine 281 is modified (N6-(pyridoxal phosphate)lysine). Pyridoxal 5'-phosphate contacts are provided by tryptophan 320 and asparagine 348.

It belongs to the kynureninase family. In terms of assembly, homodimer. Requires pyridoxal 5'-phosphate as cofactor.

It is found in the cytoplasm. The catalysed reaction is L-kynurenine + H2O = anthranilate + L-alanine + H(+). It catalyses the reaction 3-hydroxy-L-kynurenine + H2O = 3-hydroxyanthranilate + L-alanine + H(+). The protein operates within amino-acid degradation; L-kynurenine degradation; L-alanine and anthranilate from L-kynurenine: step 1/1. Its pathway is cofactor biosynthesis; NAD(+) biosynthesis; quinolinate from L-kynurenine: step 2/3. Catalyzes the cleavage of L-kynurenine (L-Kyn) and L-3-hydroxykynurenine (L-3OHKyn) into anthranilic acid (AA) and 3-hydroxyanthranilic acid (3-OHAA), respectively. The sequence is that of Kynureninase (bna5) from Botryotinia fuckeliana (strain B05.10) (Noble rot fungus).